We begin with the raw amino-acid sequence, 208 residues long: Small ribosomal subunit protein uS4 (208 aa).

The 61-residue stretch at glycine 98–lysine 158 folds into the S4 RNA-binding domain.

This sequence belongs to the universal ribosomal protein uS4 family. Part of the 30S ribosomal subunit. Contacts protein S5. The interaction surface between S4 and S5 is involved in control of translational fidelity.

Its function is as follows. One of the primary rRNA binding proteins, it binds directly to 16S rRNA where it nucleates assembly of the body of the 30S subunit. Functionally, with S5 and S12 plays an important role in translational accuracy. The protein is Small ribosomal subunit protein uS4 of Haemophilus ducreyi (strain 35000HP / ATCC 700724).